The primary structure comprises 443 residues: MLKNSHVCIIIWLFGFISGFNIMITGNTLNYWFAKKDIALQTIGILSFITLPYSINFLLAPVFDTVQIKCLNKILGHRLSWICLTSTTLISLTSILSFLDPGTDLVLLSFIAFIISFFSATQDTILSALRTEIVPKELLGFTSGIYIFGYRVGMLLASSGAIYLSIYLTFNKIYQIFACVIFVYLILLILVSRYTNSVDVIEENTSYFYVARCYTMEEMHLKNEFFIKHYFNFFKNCISAYLLKIFSGSHVYRNDISLAYFIVLILIFLVLYRLPDNLINVMINPFLLHLGYNAFEIASVCKFCGVIGAIIGGLIGGIIMKYKNMLYSILLFGIIHALSHILFILLEVNGKNSLILFITIGIESITGGMTMTAYIAFISSLCQGKFRATQYSLLSSMMGISRSIFPIISGYMVVNFGWQNFFLFTTIITIPSLLILLKIQTKL.

12 helical membrane passes run 6–26 (HVCIIIWLFGFISGFNIMITG), 43–63 (IGILSFITLPYSINFLLAPVF), 74–96 (ILGHRLSWICLTSTTLISLTSIL), 106–128 (VLLSFIAFIISFFSATQDTILSA), 144–164 (GIYIFGYRVGMLLASSGAIYL), 172–192 (KIYQIFACVIFVYLILLILVS), 255–275 (DISLAYFIVLILIFLVLYRLP), 300–320 (VCKFCGVIGAIIGGLIGGIIM), 326–346 (LYSILLFGIIHALSHILFILL), 355–375 (ILFITIGIESITGGMTMTAYI), 394–414 (LSSMMGISRSIFPIISGYMVV), and 416–436 (FGWQNFFLFTTIITIPSLLIL).

This sequence belongs to the major facilitator superfamily.

It is found in the cell inner membrane. This is Putative transporter AmpG 1 (ampG1) from Rickettsia typhi (strain ATCC VR-144 / Wilmington).